The primary structure comprises 184 residues: Signal peptidase I S (184 aa).

Over 1-18 the chain is Cytoplasmic; sequence MKSENVSKKKSILEWAKA. Residues 19-39 form a helical membrane-spanning segment; that stretch reads IVIAVVLALLIRNFIFAPYVV. Residues 40-184 lie on the Extracellular side of the membrane; it reads DGDSMYPTLH…YPFNEMRKTN (145 aa). Residues Ser-43 and Lys-83 contribute to the active site.

The protein belongs to the peptidase S26 family.

The protein resides in the cell membrane. The enzyme catalyses Cleavage of hydrophobic, N-terminal signal or leader sequences from secreted and periplasmic proteins.. Not essential for cell viability, but required for efficient secretion of many proteins. The protein is Signal peptidase I S (sipS) of Bacillus subtilis (strain 168).